Reading from the N-terminus, the 98-residue chain is Feather keratin 3 (98 aa).

Belongs to the avian keratin family. As to quaternary structure, the avian keratins (F-ker, S-ker, C-ker and B-ker) are a complex mixture of very similar polypeptides.

This chain is Feather keratin 3, found in Gallus gallus (Chicken).